Here is a 301-residue protein sequence, read N- to C-terminus: 2-dehydropantoate 2-reductase (301 aa).

NADP(+) contacts are provided by residues 7–12, Lys74, Asn99, and Ala123; that span reads GAGAIG. Lys179 acts as the Proton donor in catalysis. Residues Lys179, Asn183, Asn187, Asn197, and 246-249 each bind substrate; that span reads NYNS. NADP(+) is bound at residue Glu261.

Belongs to the ketopantoate reductase family.

The protein resides in the cytoplasm. The enzyme catalyses (R)-pantoate + NAD(+) = 2-dehydropantoate + NADH + H(+). The catalysed reaction is (R)-pantoate + NADP(+) = 2-dehydropantoate + NADPH + H(+). It participates in cofactor biosynthesis; coenzyme A biosynthesis. Functionally, catalyzes the NAD(P)H-dependent reduction of ketopantoate into pantoic acid. The sequence is that of 2-dehydropantoate 2-reductase from Pyrococcus horikoshii (strain ATCC 700860 / DSM 12428 / JCM 9974 / NBRC 100139 / OT-3).